A 400-amino-acid polypeptide reads, in one-letter code: tRNA(Met) cytidine acetate ligase (400 aa).

ATP-binding positions include I7–H20, G101, N159, and R184.

It belongs to the TmcAL family.

The protein resides in the cytoplasm. The catalysed reaction is cytidine(34) in elongator tRNA(Met) + acetate + ATP = N(4)-acetylcytidine(34) in elongator tRNA(Met) + AMP + diphosphate. Catalyzes the formation of N(4)-acetylcytidine (ac(4)C) at the wobble position of elongator tRNA(Met), using acetate and ATP as substrates. First activates an acetate ion to form acetyladenylate (Ac-AMP) and then transfers the acetyl group to tRNA to form ac(4)C34. This Caldicellulosiruptor saccharolyticus (strain ATCC 43494 / DSM 8903 / Tp8T 6331) protein is tRNA(Met) cytidine acetate ligase.